We begin with the raw amino-acid sequence, 177 residues long: MGGQKIVLLSIFVCFYVFSLVSCTEFEAGGENGWIIPQSSNQSDIFNQWASKNRFKVGDTIRFKYKKDSVLVVTEDEYKKCQTTKPELYSNHDDTVFKLDRPGLFYFISGVSGHCEQGQKMIIKVMEVESTPQSPPPSSSLPASAHKKNHAVRKTSRFLGAGLVTISILVITVFSLV.

An N-terminal signal peptide occupies residues 1 to 23; that stretch reads MGGQKIVLLSIFVCFYVFSLVSC. Residues 24–127 enclose the Phytocyanin domain; sequence TEFEAGGENG…GQKMIIKVME (104 aa). A glycan (N-linked (GlcNAc...) asparagine) is linked at Asn41. The cysteines at positions 81 and 115 are disulfide-linked. Asn149 carries GPI-anchor amidated asparagine lipidation. The propeptide at 150–177 is removed in mature form; the sequence is HAVRKTSRFLGAGLVTISILVITVFSLV.

Belongs to the early nodulin-like (ENODL) family. Confined to flowers.

The protein resides in the cell membrane. May act as a carbohydrate transporter. The sequence is that of Early nodulin-like protein 6 from Arabidopsis thaliana (Mouse-ear cress).